We begin with the raw amino-acid sequence, 196 residues long: Small ribosomal subunit protein uS4c (196 aa).

The interval Gly-16–Phe-36 is disordered. Residues Met-89–Leu-169 enclose the S4 RNA-binding domain.

This sequence belongs to the universal ribosomal protein uS4 family. Part of the 30S ribosomal subunit. Contacts protein S5. The interaction surface between S4 and S5 is involved in control of translational fidelity.

The protein localises to the plastid. It localises to the chloroplast. One of the primary rRNA binding proteins, it binds directly to 16S rRNA where it nucleates assembly of the body of the 30S subunit. Functionally, with S5 and S12 plays an important role in translational accuracy. The polypeptide is Small ribosomal subunit protein uS4c (rps4) (Cinna latifolia (Drooping woodreed)).